Consider the following 110-residue polypeptide: Integration host factor subunit alpha (110 aa).

Belongs to the bacterial histone-like protein family. Heterodimer of an alpha and a beta chain.

In terms of biological role, this protein is one of the two subunits of integration host factor, a specific DNA-binding protein that functions in genetic recombination as well as in transcriptional and translational control. In Nitrobacter hamburgensis (strain DSM 10229 / NCIMB 13809 / X14), this protein is Integration host factor subunit alpha.